Consider the following 437-residue polypeptide: Trypacidin cluster transcriptional coactivator tpcD (437 aa).

Residues 75–144 enclose the HTH iclR-type domain; it reads LAVQSQLLSC…PQRGHVAHSP (70 aa). The segment at residues 105–124 is a DNA-binding region (H-T-H motif); the sequence is IADLARLSGVPEAQLARIIR.

Specifically expressed in conidia.

The protein localises to the nucleus. Functionally, transcriptional coactivator; part of the gene cluster that mediates the biosynthesis of trypacidin, a mycotoxin with antiprotozoal activity and that plays a role in the infection process. With tpcE, coregulates the production of trypacidin. The sequence is that of Trypacidin cluster transcriptional coactivator tpcD from Aspergillus fumigatus (strain ATCC MYA-4609 / CBS 101355 / FGSC A1100 / Af293) (Neosartorya fumigata).